The chain runs to 631 residues: MPSQEENELYMVKEAQRLRKSDPCAAMAWIITAKTLYPNAFNLQYEAYLLERDAQNYEEAAKCFSAIATNFQNQHTELWQEINSLTNALRNENETTPEHEFYVKMYKHLTPEVQHNIFMHTINHSADNLERIYIYILMFNKFPKSAITQAPRLLEMLAEGMKTEPDLYQRILVEEVLPMIQNKPPELSPNLACRLYTSSLEFYLRQIMDESDTADAWKNIFKVLMICGQMMGWEPFLPFSKHVNQNVYWEKLVDILSGSPAGSSQVLFYATTLFIYSLHGYIRNCKLRIEDADVTHVLVEGFMEWSPEGDGSEVPSMEPPKFSLTTAISPELSKAFLHAAQCWQLLNTDQFQRDFSQLMLALPLAPWISRFLFDLAIYFGHRDEANKLMADMTTQSSLVQSLQILSLNLMQGSMTLQGFQCILKILSELPTTQGQLLENMSLKGHRHMVFLPLTRSALVQYCVGAIISRLSRKVFEPNVPDRLLGDILVLQQLNLLNDVLLTQQIFNLIKQRKSFNLRTLSTYIINIDLLEELSHIWNSQQEDNFELTSSPNSSGTPTATTVAGGSQSRRIGTRGADKGARDEFRAITRQQIARCNENVITLLANFINQEHLMLAQHIFGISQPVETIVIK.

Residues 545–570 (FELTSSPNSSGTPTATTVAGGSQSRR) show a composition bias toward polar residues. A disordered region spans residues 545 to 577 (FELTSSPNSSGTPTATTVAGGSQSRRIGTRGAD).

This sequence belongs to the Integrator subunit 10 family. As to quaternary structure, belongs to the multiprotein complex Integrator, at least composed of IntS1, IntS2, IntS3, IntS4, omd/IntS5, IntS6, defl/IntS7, IntS8, IntS9, IntS10, IntS11, IntS12, asun/IntS13, IntS14 and IntS15. The core complex associates with protein phosphatase 2A subunits mts/PP2A and Pp2A-29B, to form the Integrator-PP2A (INTAC) complex.

It localises to the nucleus. Component of the integrator complex, a multiprotein complex that terminates RNA polymerase II (Pol II) transcription in the promoter-proximal region of genes. The integrator complex provides a quality checkpoint during transcription elongation by driving premature transcription termination of transcripts that are unfavorably configured for transcriptional elongation: the complex terminates transcription by (1) catalyzing dephosphorylation of the C-terminal domain (CTD) of Pol II subunit Polr2A/Rbp1 and Spt5, and (2) degrading the exiting nascent RNA transcript via endonuclease activity. The integrator complex is also involved in the 3'-end processing of the U7 snRNA, and also the spliceosomal snRNAs U1, U2, U4 and U5. The sequence is that of Integrator complex subunit 10 from Drosophila melanogaster (Fruit fly).